We begin with the raw amino-acid sequence, 420 residues long: Methylaspartate ammonia-lyase 1 (420 aa).

Glutamine 173 lines the (2S,3S)-3-methyl-L-aspartate pocket. Residues aspartate 237, glutamate 272, and aspartate 306 each coordinate Mg(2+). Position 328 (glutamine 328) interacts with (2S,3S)-3-methyl-L-aspartate. Lysine 330 functions as the Proton acceptor in the catalytic mechanism. 359 to 360 (SC) is a (2S,3S)-3-methyl-L-aspartate binding site.

In terms of assembly, homodimer. Mg(2+) is required as a cofactor.

The catalysed reaction is (2S,3S)-3-methyl-L-aspartate = mesaconate + NH4(+). It functions in the pathway amino-acid degradation; L-glutamate degradation via mesaconate pathway; acetate and pyruvate from L-glutamate: step 2/4. Involved in the methylaspartate cycle. Catalyzes the formation of the alpha,beta-unsaturated bond by the reversible anti elimination of ammonia from L-threo-beta-methylaspartate (L-threo-(2S,3S)-3-methylaspartate) to give mesaconate. It can also catalyze the amination of fumarate and ethylfumarate, and the deamination of hydroxylamine, hydrazine, methylamine and ethylamine. The polypeptide is Methylaspartate ammonia-lyase 1 (Carboxydothermus hydrogenoformans (strain ATCC BAA-161 / DSM 6008 / Z-2901)).